Reading from the N-terminus, the 142-residue chain is Cytochrome b5-related protein (142 aa).

One can recognise a Cytochrome b5 heme-binding domain in the interval 16–100 (PTYRNSAPVT…IAKYKVRDAY (85 aa)). 2 residues coordinate heme: histidine 59 and histidine 82.

The protein belongs to the cytochrome b5 family.

In terms of biological role, may play a role in muscle cell metabolism. The protein is Cytochrome b5-related protein (Cyt-b5-r) of Drosophila virilis (Fruit fly).